We begin with the raw amino-acid sequence, 166 residues long: Large ribosomal subunit protein uL11 (166 aa).

It belongs to the universal ribosomal protein uL11 family.

This protein binds directly to 26S ribosomal RNA. This Prunus armeniaca (Apricot) protein is Large ribosomal subunit protein uL11 (RPL12).